A 654-amino-acid polypeptide reads, in one-letter code: Collagen alpha-1(XXV) chain (654 aa).

A disordered region spans residues 1 to 26 (MLLKKHAGKGGGREPRSEDPTPAEQH). Over 1–33 (MLLKKHAGKGGGREPRSEDPTPAEQHCARTMPP) the chain is Cytoplasmic. Residues 34–54 (CAVLAALLSVVAVVSCLYLGV) form a helical; Signal-anchor for type II membrane protein membrane-spanning segment. The Extracellular segment spans residues 55-654 (KTNDLQARIA…GLPMPGCWQK (600 aa)). A Pyrrolidone carboxylic acid (Glu) modification is found at E113. Residues 116–168 (SECNCPAGPPGKRGKRGRRGESGPPGQPGPQGPPGPKGDKGEQGDQGPRMVFP) are disordered. Positions 121-164 (PAGPPGKRGKRGRRGESGPPGQPGPQGPPGPKGDKGEQGDQGPR) constitute a Collagen-like 1 domain. A compositionally biased stretch (pro residues) spans 140-151 (PGQPGPQGPPGP). Residues 181 to 188 (LIKRRLIK) form an interaction with amyloid-beta peptide region. Disordered regions lie at residues 189–426 (GDQG…QGAT) and 445–654 (LTVT…CWQK). 5 consecutive Collagen-like domains span residues 192–247 (GQAG…QKGS), 249–308 (GAPG…PGSS), 311–370 (GIKG…AGPP), 372–425 (RGER…DQGA), and 447–505 (VTGP…PGLP). The segment covering 196–208 (PPGPPGPPGPRGP) has biased composition (pro residues). Low complexity predominate over residues 230 to 245 (PGEQGLMGPLGPPGQK). A compositionally biased stretch (basic and acidic residues) spans 280-290 (EPGEQGEKGDA). Residues 336–358 (LPGIKGEPGFIGPQGEPGLPGLP) are compositionally biased toward low complexity. 2 stretches are compositionally biased toward basic and acidic residues: residues 361 to 377 (KGER…ERGE) and 398 to 407 (SKGDRGEKGD). Low complexity predominate over residues 457 to 466 (QGLQGPKGEQ). Over residues 494–503 (GEKGGIGLPG) the composition is skewed to gly residues. Residues 517 to 527 (SGMPGPQGPSI) are compositionally biased toward low complexity. Pro residues predominate over residues 528–543 (IGPPGPPGPHGPPGPM). In terms of domain architecture, Collagen-like 7 spans 571–630 (GEKGAMGEPGPRGPYGLPGKDGEPGLDGFPGPRGEKGDLGEKGEKGFRGVKGEKGEPGQP). Residues 603-626 (RGEKGDLGEKGEKGFRGVKGEKGE) are compositionally biased toward basic and acidic residues.

As to quaternary structure, forms homodimers and homotrimers. Binds to the fibrillized forms of amyloid-beta protein 40 (beta-APP40) and amyloid-beta protein 42 (beta-APP42). Found associated with beta-APP42 more frequently than with beta-APP40. In terms of processing, undergoes proteolytic cleavage by furin protease to yield the soluble collagen-like Alzheimer amyloid plaque component. Glycosylated. Post-translationally, hydroxylated on 11% of proline residues and 49% of lysine residues. As to expression, expressed predominantly in brain. Deposited preferentially in primitive or neuritic amyloid plaques which are typical of Alzheimer disease.

The protein localises to the membrane. Functionally, inhibits fibrillization of amyloid-beta peptide during the elongation phase. Has also been shown to assemble amyloid fibrils into protease-resistant aggregates. Binds heparin. In Homo sapiens (Human), this protein is Collagen alpha-1(XXV) chain.